Reading from the N-terminus, the 388-residue chain is Putative F-box protein At3g17490 (388 aa).

One can recognise an F-box domain in the interval 1-46 (MMMPHLSEDLVEEILSRVPAISLKRLRYTCKQWNALFNDQRFSKKH).

This chain is Putative F-box protein At3g17490, found in Arabidopsis thaliana (Mouse-ear cress).